Reading from the N-terminus, the 216-residue chain is Large ribosomal subunit protein uL3 (216 aa).

Residue Gln157 is modified to N5-methylglutamine.

It belongs to the universal ribosomal protein uL3 family. Part of the 50S ribosomal subunit. Forms a cluster with proteins L14 and L19. In terms of processing, methylated by PrmB.

Its function is as follows. One of the primary rRNA binding proteins, it binds directly near the 3'-end of the 23S rRNA, where it nucleates assembly of the 50S subunit. The polypeptide is Large ribosomal subunit protein uL3 (Xanthomonas oryzae pv. oryzae (strain MAFF 311018)).